Here is a 712-residue protein sequence, read N- to C-terminus: 1,4-alpha-glucan branching enzyme GlgB (712 aa).

The Nucleophile role is filled by D397. E450 functions as the Proton donor in the catalytic mechanism.

Belongs to the glycosyl hydrolase 13 family. GlgB subfamily. In terms of assembly, monomer.

The enzyme catalyses Transfers a segment of a (1-&gt;4)-alpha-D-glucan chain to a primary hydroxy group in a similar glucan chain.. The protein operates within glycan biosynthesis; glycogen biosynthesis. Catalyzes the formation of the alpha-1,6-glucosidic linkages in glycogen by scission of a 1,4-alpha-linked oligosaccharide from growing alpha-1,4-glucan chains and the subsequent attachment of the oligosaccharide to the alpha-1,6 position. The chain is 1,4-alpha-glucan branching enzyme GlgB from Bradyrhizobium sp. (strain ORS 278).